The primary structure comprises 242 residues: Proteasome subunit alpha (242 aa).

This sequence belongs to the peptidase T1A family. In terms of assembly, the 20S proteasome core is composed of 14 alpha and 14 beta subunits that assemble into four stacked heptameric rings, resulting in a barrel-shaped structure. The two inner rings, each composed of seven catalytic beta subunits, are sandwiched by two outer rings, each composed of seven alpha subunits. The catalytic chamber with the active sites is on the inside of the barrel. Has a gated structure, the ends of the cylinder being occluded by the N-termini of the alpha-subunits. Is capped at one or both ends by the proteasome regulatory ATPase, PAN.

Its subcellular location is the cytoplasm. Its activity is regulated as follows. The formation of the proteasomal ATPase PAN-20S proteasome complex, via the docking of the C-termini of PAN into the intersubunit pockets in the alpha-rings, triggers opening of the gate for substrate entry. Interconversion between the open-gate and close-gate conformations leads to a dynamic regulation of the 20S proteasome proteolysis activity. In terms of biological role, component of the proteasome core, a large protease complex with broad specificity involved in protein degradation. The polypeptide is Proteasome subunit alpha (Sulfurisphaera tokodaii (strain DSM 16993 / JCM 10545 / NBRC 100140 / 7) (Sulfolobus tokodaii)).